A 344-amino-acid chain; its full sequence is Phosphate acyltransferase (344 aa).

This sequence belongs to the PlsX family. In terms of assembly, homodimer. Probably interacts with PlsY.

The protein resides in the cytoplasm. It catalyses the reaction a fatty acyl-[ACP] + phosphate = an acyl phosphate + holo-[ACP]. It participates in lipid metabolism; phospholipid metabolism. Functionally, catalyzes the reversible formation of acyl-phosphate (acyl-PO(4)) from acyl-[acyl-carrier-protein] (acyl-ACP). This enzyme utilizes acyl-ACP as fatty acyl donor, but not acyl-CoA. The protein is Phosphate acyltransferase of Yersinia enterocolitica serotype O:8 / biotype 1B (strain NCTC 13174 / 8081).